A 1488-amino-acid polypeptide reads, in one-letter code: Chromosome partition protein MukB (1488 aa).

34–41 (GGNGAGKS) is a binding site for ATP. Coiled-coil stretches lie at residues 326-418 (LEAD…QYNQ), 444-472 (LDTFQAKEQEATEKLLSLEQKMSVAQTAH), and 509-602 (RHLA…RRAP). A flexible hinge region spans residues 666–783 (PGGAEDQRLN…SLPIFGRAAR (118 aa)). Coiled coils occupy residues 835-923 (EAEI…AKLE), 977-1116 (EMLS…AKAG), and 1209-1265 (VEAI…LQSV). The tract at residues 1049-1074 (ADSGAEERARQRRDELHAQLSNNRSR) is disordered. The segment covering 1051-1065 (SGAEERARQRRDELH) has biased composition (basic and acidic residues).

Belongs to the SMC family. MukB subfamily. As to quaternary structure, homodimerization via its hinge domain. Binds to DNA via its C-terminal region. Interacts, and probably forms a ternary complex, with MukE and MukF via its C-terminal region. The complex formation is stimulated by calcium or magnesium. Interacts with tubulin-related protein FtsZ.

It is found in the cytoplasm. The protein localises to the nucleoid. Functionally, plays a central role in chromosome condensation, segregation and cell cycle progression. Functions as a homodimer, which is essential for chromosome partition. Involved in negative DNA supercoiling in vivo, and by this means organize and compact chromosomes. May achieve or facilitate chromosome segregation by condensation DNA from both sides of a centrally located replisome during cell division. The polypeptide is Chromosome partition protein MukB (Salmonella heidelberg (strain SL476)).